Consider the following 378-residue polypeptide: Cytochrome b (378 aa).

The next 4 membrane-spanning stretches (helical) occupy residues 33–53, 77–98, 113–133, and 178–198; these read FGSL…FLAM, WLIR…YLHI, WNTG…GYVL, and FFAF…LHFL. Residues H83 and H97 each coordinate heme b. Heme b-binding residues include H182 and H196. H201 is a binding site for a ubiquinone. 4 helical membrane-spanning segments follow: residues 226–246, 288–308, 320–340, and 347–367; these read YKDL…AVFS, LGGV…PFLH, WSQL…WIGG, and LTTV…FLMP.

This sequence belongs to the cytochrome b family. The cytochrome bc1 complex contains 3 respiratory subunits (MT-CYB, CYC1 and UQCRFS1), 2 core proteins (UQCRC1 and UQCRC2) and probably 6 low-molecular weight proteins. Heme b serves as cofactor.

The protein localises to the mitochondrion inner membrane. Functionally, component of the ubiquinol-cytochrome c reductase complex (complex III or cytochrome b-c1 complex) that is part of the mitochondrial respiratory chain. The b-c1 complex mediates electron transfer from ubiquinol to cytochrome c. Contributes to the generation of a proton gradient across the mitochondrial membrane that is then used for ATP synthesis. This chain is Cytochrome b (mt-cyb), found in Indostomus paradoxus (Armoured stickleback).